A 379-amino-acid polypeptide reads, in one-letter code: RIB43A-like with coiled-coils protein 1 (379 aa).

The disordered stretch occupies residues 1-21 (MYNIKQSTDTKEAAAIEARRN). Residues 8–21 (TDTKEAAAIEARRN) show a composition bias toward basic and acidic residues. Coiled-coil stretches lie at residues 82–111 (KEEA…GREF) and 216–304 (NANK…QAEK).

It belongs to the RIB43A family. As to quaternary structure, microtubule inner protein component of sperm flagellar doublet microtubules.

The protein localises to the cytoplasm. It is found in the cytoskeleton. Its subcellular location is the flagellum axoneme. The polypeptide is RIB43A-like with coiled-coils protein 1 (RIBC1) (Homo sapiens (Human)).